The sequence spans 209 residues: MSRAATTRMGLLEVRARRAVAGKGARLLRAKREVLASELWKLVHDVLEGRARLDEALHRAVKALELAKALEGEERLASLALPAARAVPLAVTVRRVWGVPTPSVAAPPLVRAADQRGSSPVSWGPSGAAAARHHEESLEVLLTIASKELHLARLGEEIQETSRRINALEQLVLPALRSEASRIAAALDERDREDAVRLRRFRARHPRPA.

Belongs to the V-ATPase D subunit family.

In terms of biological role, produces ATP from ADP in the presence of a proton gradient across the membrane. This chain is V-type ATP synthase subunit D, found in Anaeromyxobacter sp. (strain K).